The primary structure comprises 236 residues: Small ribosomal subunit protein uS2c (236 aa).

The protein belongs to the universal ribosomal protein uS2 family.

The protein localises to the plastid. Its subcellular location is the chloroplast. This is Small ribosomal subunit protein uS2c (rps2) from Physcomitrium patens (Spreading-leaved earth moss).